The following is a 395-amino-acid chain: Acetate kinase (395 aa).

Asn-8 lines the Mg(2+) pocket. ATP is bound at residue Lys-15. Arg-94 provides a ligand contact to substrate. Asp-151 functions as the Proton donor/acceptor in the catalytic mechanism. Residues 210-214 (HLGNG), 284-286 (DMR), and 329-333 (GIGEN) each bind ATP. Glu-382 contributes to the Mg(2+) binding site.

Belongs to the acetokinase family. Homodimer. Requires Mg(2+) as cofactor. The cofactor is Mn(2+).

The protein resides in the cytoplasm. The catalysed reaction is acetate + ATP = acetyl phosphate + ADP. Its pathway is metabolic intermediate biosynthesis; acetyl-CoA biosynthesis; acetyl-CoA from acetate: step 1/2. Its function is as follows. Catalyzes the formation of acetyl phosphate from acetate and ATP. Can also catalyze the reverse reaction. The chain is Acetate kinase from Protochlamydia amoebophila (strain UWE25).